We begin with the raw amino-acid sequence, 430 residues long: Adenylosuccinate synthetase (430 aa).

GTP is bound by residues 13 to 19 (GDEGKGK) and 41 to 43 (GHT). D14 (proton acceptor) is an active-site residue. Positions 14 and 41 each coordinate Mg(2+). IMP-binding positions include 14–17 (DEGK), 39–42 (NAGH), T130, R144, Q225, T240, and R304. The active-site Proton donor is the H42. Residue 300 to 306 (ASTGRPR) coordinates substrate. Residues R306, 332-334 (KLD), and 414-416 (STG) contribute to the GTP site.

Belongs to the adenylosuccinate synthetase family. As to quaternary structure, homodimer. The cofactor is Mg(2+).

The protein localises to the cytoplasm. It catalyses the reaction IMP + L-aspartate + GTP = N(6)-(1,2-dicarboxyethyl)-AMP + GDP + phosphate + 2 H(+). It participates in purine metabolism; AMP biosynthesis via de novo pathway; AMP from IMP: step 1/2. Functionally, plays an important role in the de novo pathway of purine nucleotide biosynthesis. Catalyzes the first committed step in the biosynthesis of AMP from IMP. The sequence is that of Adenylosuccinate synthetase from Xylella fastidiosa (strain M23).